The chain runs to 204 residues: Superoxide dismutase [Mn] (204 aa).

4 residues coordinate Mn(2+): H29, H84, D167, and H171.

The protein belongs to the iron/manganese superoxide dismutase family. As to quaternary structure, homotetramer. Mn(2+) serves as cofactor.

The catalysed reaction is 2 superoxide + 2 H(+) = H2O2 + O2. Functionally, destroys superoxide anion radicals which are normally produced within the cells and which are toxic to biological systems. The sequence is that of Superoxide dismutase [Mn] (sodA) from Thermus thermophilus (strain ATCC BAA-163 / DSM 7039 / HB27).